The chain runs to 246 residues: Aliphatic sulfonates import ATP-binding protein SsuB 2 (246 aa).

The ABC transporter domain occupies 4 to 218 (VTVRGLRRAF…RRDPRFEQAR (215 aa)). 36-43 (GRSGGGKT) serves as a coordination point for ATP.

It belongs to the ABC transporter superfamily. Aliphatic sulfonates importer (TC 3.A.1.17.2) family. The complex is composed of two ATP-binding proteins (SsuB), two transmembrane proteins (SsuC) and a solute-binding protein (SsuA).

The protein resides in the cell membrane. It catalyses the reaction ATP + H2O + aliphatic sulfonate-[sulfonate-binding protein]Side 1 = ADP + phosphate + aliphatic sulfonateSide 2 + [sulfonate-binding protein]Side 1.. Part of the ABC transporter complex SsuABC involved in aliphatic sulfonates import. Responsible for energy coupling to the transport system. The polypeptide is Aliphatic sulfonates import ATP-binding protein SsuB 2 (Frankia alni (strain DSM 45986 / CECT 9034 / ACN14a)).